We begin with the raw amino-acid sequence, 159 residues long: Growth arrest and DNA damage-inducible protein GADD45 gamma (159 aa).

The homodimerization stretch occupies residues 43-86; the sequence is VYESAKVLNVDPDNVTFCVLAADEEDEGDIALQIHFTLIQAFCC.

Belongs to the GADD45 family. In terms of assembly, undergoes concentration-dependent homodimerization, which is required for growth inhibititory activity and enhances interaction with PCNA. Interacts with GADD45GIP1. Interacts with PCNA.

In terms of biological role, involved in the regulation of growth and apoptosis. Mediates activation of stress-responsive MTK1/MEKK4 MAPKKK. The sequence is that of Growth arrest and DNA damage-inducible protein GADD45 gamma (Gadd45g) from Rattus norvegicus (Rat).